We begin with the raw amino-acid sequence, 405 residues long: Arginine deiminase (405 aa).

The active-site Amidino-cysteine intermediate is Cys-395.

The protein belongs to the arginine deiminase family.

Its subcellular location is the cytoplasm. It carries out the reaction L-arginine + H2O = L-citrulline + NH4(+). It participates in amino-acid degradation; L-arginine degradation via ADI pathway; carbamoyl phosphate from L-arginine: step 1/2. The protein is Arginine deiminase of Rhodococcus erythropolis (strain PR4 / NBRC 100887).